Here is a 382-residue protein sequence, read N- to C-terminus: Dual-specificity RNA methyltransferase RlmN (382 aa).

Glu-91 serves as the catalytic Proton acceptor. A Radical SAM core domain is found at 97–339 (EEDRGTLCIS…TTIRKTRGDD (243 aa)). The cysteines at positions 104 and 344 are disulfide-linked. Positions 111, 115, and 118 each coordinate [4Fe-4S] cluster. S-adenosyl-L-methionine is bound by residues 165 to 166 (GE), Ser-197, 219 to 221 (SLH), and Asn-301. The active-site S-methylcysteine intermediate is the Cys-344.

This sequence belongs to the radical SAM superfamily. RlmN family. [4Fe-4S] cluster is required as a cofactor.

The protein resides in the cytoplasm. It carries out the reaction adenosine(2503) in 23S rRNA + 2 reduced [2Fe-2S]-[ferredoxin] + 2 S-adenosyl-L-methionine = 2-methyladenosine(2503) in 23S rRNA + 5'-deoxyadenosine + L-methionine + 2 oxidized [2Fe-2S]-[ferredoxin] + S-adenosyl-L-homocysteine. It catalyses the reaction adenosine(37) in tRNA + 2 reduced [2Fe-2S]-[ferredoxin] + 2 S-adenosyl-L-methionine = 2-methyladenosine(37) in tRNA + 5'-deoxyadenosine + L-methionine + 2 oxidized [2Fe-2S]-[ferredoxin] + S-adenosyl-L-homocysteine. Functionally, specifically methylates position 2 of adenine 2503 in 23S rRNA and position 2 of adenine 37 in tRNAs. m2A2503 modification seems to play a crucial role in the proofreading step occurring at the peptidyl transferase center and thus would serve to optimize ribosomal fidelity. This Albidiferax ferrireducens (strain ATCC BAA-621 / DSM 15236 / T118) (Rhodoferax ferrireducens) protein is Dual-specificity RNA methyltransferase RlmN.